A 449-amino-acid polypeptide reads, in one-letter code: Ribulose bisphosphate carboxylase large chain (449 aa).

Residues Met-1–Ser-2 constitute a propeptide that is removed on maturation. At Pro-3 the chain carries N-acetylproline. Lys-14 is subject to N6,N6,N6-trimethyllysine. 2 residues coordinate substrate: Asn-123 and Thr-173. The active-site Proton acceptor is Lys-175. Residue Lys-177 participates in substrate binding. Positions 201, 203, and 204 each coordinate Mg(2+). Lys-201 carries the post-translational modification N6-carboxylysine. His-294 functions as the Proton acceptor in the catalytic mechanism. Positions 295, 327, and 379 each coordinate substrate.

It belongs to the RuBisCO large chain family. Type I subfamily. Heterohexadecamer of 8 large chains and 8 small chains; disulfide-linked. The disulfide link is formed within the large subunit homodimers. Mg(2+) serves as cofactor. The disulfide bond which can form in the large chain dimeric partners within the hexadecamer appears to be associated with oxidative stress and protein turnover.

The protein resides in the plastid. It is found in the chloroplast. The enzyme catalyses 2 (2R)-3-phosphoglycerate + 2 H(+) = D-ribulose 1,5-bisphosphate + CO2 + H2O. It catalyses the reaction D-ribulose 1,5-bisphosphate + O2 = 2-phosphoglycolate + (2R)-3-phosphoglycerate + 2 H(+). RuBisCO catalyzes two reactions: the carboxylation of D-ribulose 1,5-bisphosphate, the primary event in carbon dioxide fixation, as well as the oxidative fragmentation of the pentose substrate in the photorespiration process. Both reactions occur simultaneously and in competition at the same active site. This Hippocratea richardiana protein is Ribulose bisphosphate carboxylase large chain.